A 241-amino-acid chain; its full sequence is Homeobox protein TGIF2LX (241 aa).

Disordered regions lie at residues 1–58 and 126–209; these read MEAA…GNLP and TGKD…VSPE. A compositionally biased stretch (polar residues) spans 21–39; sequence AKTQSPAQDTSIMSRNNAD. A DNA-binding region (homeobox; TALE-type) is located at residues 48–111; sequence EHKKKRKGNL…INARRRILPD (64 aa).

This sequence belongs to the TALE/TGIF homeobox family.

It is found in the nucleus. Functionally, may have a transcription role in testis. This Gorilla gorilla gorilla (Western lowland gorilla) protein is Homeobox protein TGIF2LX (TGIF2LX).